Here is a 220-residue protein sequence, read N- to C-terminus: Deoxyribose-phosphate aldolase (220 aa).

D89 acts as the Proton donor/acceptor in catalysis. The active-site Schiff-base intermediate with acetaldehyde is the K151. The active-site Proton donor/acceptor is K180.

Belongs to the DeoC/FbaB aldolase family. DeoC type 1 subfamily.

The protein resides in the cytoplasm. It catalyses the reaction 2-deoxy-D-ribose 5-phosphate = D-glyceraldehyde 3-phosphate + acetaldehyde. It participates in carbohydrate degradation; 2-deoxy-D-ribose 1-phosphate degradation; D-glyceraldehyde 3-phosphate and acetaldehyde from 2-deoxy-alpha-D-ribose 1-phosphate: step 2/2. In terms of biological role, catalyzes a reversible aldol reaction between acetaldehyde and D-glyceraldehyde 3-phosphate to generate 2-deoxy-D-ribose 5-phosphate. The sequence is that of Deoxyribose-phosphate aldolase from Streptococcus sanguinis (strain SK36).